The sequence spans 89 residues: UPF0147 protein TV0625 (89 aa).

It belongs to the UPF0147 family.

The sequence is that of UPF0147 protein TV0625 from Thermoplasma volcanium (strain ATCC 51530 / DSM 4299 / JCM 9571 / NBRC 15438 / GSS1).